Reading from the N-terminus, the 388-residue chain is Formate-dependent phosphoribosylglycinamide formyltransferase (388 aa).

Residues 11–12 and E71 contribute to the N(1)-(5-phospho-beta-D-ribosyl)glycinamide site; that span reads EL. ATP contacts are provided by residues R103, K144, 149–154, 184–187, and E192; these read SSGKGQ and EEFI. One can recognise an ATP-grasp domain in the interval 108-300; the sequence is DLAAKELGLK…EFELHLRAVL (193 aa). 2 residues coordinate Mg(2+): E257 and E270. Residues D277, K349, and 356-357 each bind N(1)-(5-phospho-beta-D-ribosyl)glycinamide; that span reads RR.

This sequence belongs to the PurK/PurT family. In terms of assembly, homodimer.

The enzyme catalyses N(1)-(5-phospho-beta-D-ribosyl)glycinamide + formate + ATP = N(2)-formyl-N(1)-(5-phospho-beta-D-ribosyl)glycinamide + ADP + phosphate + H(+). It functions in the pathway purine metabolism; IMP biosynthesis via de novo pathway; N(2)-formyl-N(1)-(5-phospho-D-ribosyl)glycinamide from N(1)-(5-phospho-D-ribosyl)glycinamide (formate route): step 1/1. Functionally, involved in the de novo purine biosynthesis. Catalyzes the transfer of formate to 5-phospho-ribosyl-glycinamide (GAR), producing 5-phospho-ribosyl-N-formylglycinamide (FGAR). Formate is provided by PurU via hydrolysis of 10-formyl-tetrahydrofolate. The sequence is that of Formate-dependent phosphoribosylglycinamide formyltransferase from Bacteroides fragilis (strain ATCC 25285 / DSM 2151 / CCUG 4856 / JCM 11019 / LMG 10263 / NCTC 9343 / Onslow / VPI 2553 / EN-2).